We begin with the raw amino-acid sequence, 600 residues long: Monooxygenase ptmN (600 aa).

It belongs to the FMO family. FAD is required as a cofactor.

The protein operates within secondary metabolite biosynthesis. Monooxygenase; part of the gene cluster that mediates the biosynthesis of the indole diterpenes penitrems. The geranylgeranyl diphosphate (GGPP) synthase ptmG catalyzes the first step in penitrem biosynthesis via conversion of farnesyl pyrophosphate and isopentyl pyrophosphate into geranylgeranyl pyrophosphate (GGPP). Condensation of indole-3-glycerol phosphate with GGPP by the prenyl transferase ptmC then forms 3-geranylgeranylindole (3-GGI). Epoxidation by the FAD-dependent monooxygenase ptmM leads to a epoxidized-GGI that is substrate of the terpene cyclase ptmB for cyclization to yield paspaline. Paspaline is subsequently converted to 13-desoxypaxilline by the cytochrome P450 monooxygenase ptmP, the latter being then converted to paxilline by the cytochrome P450 monooxygenase ptmQ. Paxilline is converted to beta-paxitriol via C-10 ketoreduction by the short-chain dehydrogenase ptmH which can be monoprenylated at the C-20 by the indole diterpene prenyltransferase ptmD. A two-step elimination (acetylation and elimination) process performed by the O-acetyltransferase ptmV and ptmI leads to the production of the prenylated form of penijanthine. The FAD-linked oxidoreductase ptmO then converts the prenylated form of penijanthine into PC-M5 which is in turn transformed into PC-M4 by the aromatic dimethylallyltransferase ptmE. Five sequential oxidative transformations performed by the cytochrome P450 monooxygenases ptmK, ptmU, ptmL, ptmN and ptmJ yield the various penitrem compounds. PtmK, ptmU and ptmM are involved in the formation of the key bicyclic ring of penitrem C via the formation of the intermediates secopenitrem D and penitrem D. PtmL catalyzes the epoxidation of penitrem D and C to yield penitrem B and F, respectively. PtmJ catalyzes the last benzylic hydroxylation to convert penitrem B to prenitrem E and penitrem F to penitrem A. The protein is Monooxygenase ptmN of Penicillium ochrochloron.